The chain runs to 350 residues: Nicotinate-nucleotide--dimethylbenzimidazole phosphoribosyltransferase (350 aa).

The active-site Proton acceptor is glutamate 317.

Belongs to the CobT family.

It catalyses the reaction 5,6-dimethylbenzimidazole + nicotinate beta-D-ribonucleotide = alpha-ribazole 5'-phosphate + nicotinate + H(+). The protein operates within nucleoside biosynthesis; alpha-ribazole biosynthesis; alpha-ribazole from 5,6-dimethylbenzimidazole: step 1/2. Its function is as follows. Catalyzes the synthesis of alpha-ribazole-5'-phosphate from nicotinate mononucleotide (NAMN) and 5,6-dimethylbenzimidazole (DMB). The polypeptide is Nicotinate-nucleotide--dimethylbenzimidazole phosphoribosyltransferase (Shewanella oneidensis (strain ATCC 700550 / JCM 31522 / CIP 106686 / LMG 19005 / NCIMB 14063 / MR-1)).